The chain runs to 346 residues: Pyrophosphate--fructose 6-phosphate 1-phosphotransferase (346 aa).

Position 13 (Gly13) interacts with diphosphate. Glu105 is a Mg(2+) binding site. Residues Thr127 to Asp129, Arg164, Met171 to Arg173, Glu224, Arg269, and His275 to Arg278 each bind substrate. Asp129 (proton acceptor) is an active-site residue.

This sequence belongs to the phosphofructokinase type A (PFKA) family. Mixed-substrate PFK group III subfamily. Homodimer. Mg(2+) serves as cofactor.

It localises to the cytoplasm. The enzyme catalyses beta-D-fructose 6-phosphate + diphosphate = beta-D-fructose 1,6-bisphosphate + phosphate + H(+). It functions in the pathway carbohydrate degradation; glycolysis; D-glyceraldehyde 3-phosphate and glycerone phosphate from D-glucose: step 3/4. Its activity is regulated as follows. Non-allosteric. In terms of biological role, catalyzes the phosphorylation of D-fructose 6-phosphate, the first committing step of glycolysis. Uses inorganic phosphate (PPi) as phosphoryl donor instead of ATP like common ATP-dependent phosphofructokinases (ATP-PFKs), which renders the reaction reversible, and can thus function both in glycolysis and gluconeogenesis. Consistently, PPi-PFK can replace the enzymes of both the forward (ATP-PFK) and reverse (fructose-bisphosphatase (FBPase)) reactions. This is Pyrophosphate--fructose 6-phosphate 1-phosphotransferase from Dictyoglomus thermophilum.